A 355-amino-acid chain; its full sequence is Capsid protein VP1/VP2 (355 aa).

A compositionally biased stretch (basic and acidic residues) spans 1–21 (MADSTTMEHDGRGTKRKREAD). Residues 1-41 (MADSTTMEHDGRGTKRKREADGGSGQGVGKGNSNAVKEGYG) form a disordered region.

It belongs to the parvoviridae capsid protein family.

The protein localises to the virion. Capsid protein self-assembles to form an icosahedral capsid with a T=1 symmetry, about 22 nm in diameter, and consisting of 60 copies of size variants of the capsid proteins, which differ in the N-terminushe capsid encapsulates the genomic ssDNA. Capsid proteins are responsible for the attachment to host cell receptors. This attachment induces virion internalization predominantly through clathrin-dependent endocytosis. This is Capsid protein VP1/VP2 (VP) from Aedes albopictus densovirus (isolate Boublik/1994) (AalDNV).